A 266-amino-acid polypeptide reads, in one-letter code: Undecaprenyl-diphosphatase (266 aa).

Transmembrane regions (helical) follow at residues methionine 1–isoleucine 21, glutamine 39–phenylalanine 59, tryptophan 87–isoleucine 107, alanine 115–phenylalanine 135, valine 144–threonine 164, alanine 183–valine 203, alanine 218–leucine 238, and methionine 246–alanine 266.

It belongs to the UppP family.

Its subcellular location is the cell inner membrane. The enzyme catalyses di-trans,octa-cis-undecaprenyl diphosphate + H2O = di-trans,octa-cis-undecaprenyl phosphate + phosphate + H(+). Functionally, catalyzes the dephosphorylation of undecaprenyl diphosphate (UPP). Confers resistance to bacitracin. This is Undecaprenyl-diphosphatase from Shewanella sediminis (strain HAW-EB3).